The chain runs to 350 residues: tRNA uridine(34) hydroxylase (350 aa).

The 95-residue stretch at 146–240 folds into the Rhodanese domain; it reads DDPDALFIDM…YARKAREQGL (95 aa). Cysteine 200 functions as the Cysteine persulfide intermediate in the catalytic mechanism.

The protein belongs to the TrhO family.

It carries out the reaction uridine(34) in tRNA + AH2 + O2 = 5-hydroxyuridine(34) in tRNA + A + H2O. In terms of biological role, catalyzes oxygen-dependent 5-hydroxyuridine (ho5U) modification at position 34 in tRNAs, the first step in 5-carboxymethoxyuridine (cmo5U) biosynthesis. May be part of an alternate pathway, which is able to bypass cmo5U biogenesis in a subset of tRNAs under aerobic conditions. The chain is tRNA uridine(34) hydroxylase from Escherichia coli O157:H7.